The sequence spans 226 residues: Deoxyribose-phosphate aldolase (226 aa).

Aspartate 93 (proton donor/acceptor) is an active-site residue. Lysine 159 serves as the catalytic Schiff-base intermediate with acetaldehyde. Lysine 189 serves as the catalytic Proton donor/acceptor.

The protein belongs to the DeoC/FbaB aldolase family. DeoC type 1 subfamily.

The protein localises to the cytoplasm. It carries out the reaction 2-deoxy-D-ribose 5-phosphate = D-glyceraldehyde 3-phosphate + acetaldehyde. It functions in the pathway carbohydrate degradation; 2-deoxy-D-ribose 1-phosphate degradation; D-glyceraldehyde 3-phosphate and acetaldehyde from 2-deoxy-alpha-D-ribose 1-phosphate: step 2/2. In terms of biological role, catalyzes a reversible aldol reaction between acetaldehyde and D-glyceraldehyde 3-phosphate to generate 2-deoxy-D-ribose 5-phosphate. In Mycobacterium marinum (strain ATCC BAA-535 / M), this protein is Deoxyribose-phosphate aldolase.